The primary structure comprises 444 residues: UDP-N-acetylmuramate--L-alanine ligase (444 aa).

110-116 (GAHGKTS) contacts ATP.

It belongs to the MurCDEF family.

The protein localises to the cytoplasm. It carries out the reaction UDP-N-acetyl-alpha-D-muramate + L-alanine + ATP = UDP-N-acetyl-alpha-D-muramoyl-L-alanine + ADP + phosphate + H(+). Its pathway is cell wall biogenesis; peptidoglycan biosynthesis. Its function is as follows. Cell wall formation. The protein is UDP-N-acetylmuramate--L-alanine ligase of Streptococcus pneumoniae (strain Hungary19A-6).